The chain runs to 674 residues: Sodium/myo-inositol cotransporter 2 (674 aa).

At 1-27 (MESSTSSPQPPLSDPLDPFPQRSLEPG) the chain is on the extracellular side. A helical transmembrane segment spans residues 28–48 (DIAVLVLYFLFVLAVGLWSTV). Over 49–56 (KTKRDTVK) the chain is Cytoplasmic. The helical transmembrane segment at 57-77 (GYFLAGGDMVWWPVGASLFAS) threads the bilayer. Residues 78–102 (NVGSGHFVGLAGSGAATGISVAAYE) are Extracellular-facing. A helical membrane pass occupies residues 103–123 (FNGMFSVLMLAWIFLPIYIAG). Topologically, residues 124–140 (QVTTMPEYLRRRFGGSR) are cytoplasmic. A helical transmembrane segment spans residues 141 to 161 (IAITLAVLYLFIYIFTKISVD). Residues 162–180 (MYAGAIFIQQSLHLDLYLS) lie on the Extracellular side of the membrane. A helical membrane pass occupies residues 181–201 (VVGLLAVTALYTVAGGLAAVI). The Cytoplasmic segment spans residues 202 to 208 (YTDALQT). Residues 209-229 (LIMLVGALTLMGYSFAAVGGM) traverse the membrane as a helical segment. The Extracellular portion of the chain corresponds to 230-272 (EGLQEKYFLALPSNRSENSSCGLPREDAFHLFRDPLTSDLPWP). Residues 273-293 (GILFGMSIPSLWYWCTDQVIV) form a helical membrane-spanning segment. The Cytoplasmic portion of the chain corresponds to 294–308 (QRSLAAKNLSHAKGG). The chain crosses the membrane as a helical span at residues 309–329 (SLMAAYLKVLPLFIMVFPGMV). Residues 330–375 (SRILFPDQVACADPETCQRVCNNPSGCSDIAYPKLVLELLPTGLRG) are Extracellular-facing. A helical membrane pass occupies residues 376-396 (LMMAVMVAALMSSLTSIFNSA). At 397 to 418 (STIFTMDLWNHVRPRASEKELM) the chain is on the cytoplasmic side. Residues 419–439 (IVGRVFVLLLVLVSVLWIPVV) form a helical membrane-spanning segment. Over 440-446 (QASQGGQ) the chain is Extracellular. A helical transmembrane segment spans residues 447–467 (LFVYIQAISSYLQPPVAMVFV). The Cytoplasmic segment spans residues 468–479 (LGCFWKRANEKG). The helical transmembrane segment at 480 to 500 (AFWGLVLGLLLGFIRLILDFI) threads the bilayer. Residues 501 to 521 (YVEPACHQPDERPSVVKNVHY) lie on the Extracellular side of the membrane. The helical transmembrane segment at 522 to 542 (LYFSMILSSVTVLTVTVMSLL) threads the bilayer. At 543-653 (TEPPSKEMIS…SIEENPVVKT (111 aa)) the chain is on the cytoplasmic side. The helical transmembrane segment at 654–674 (LLDVNCLLCICCAFFLWGYFA) threads the bilayer.

This sequence belongs to the sodium:solute symporter (SSF) (TC 2.A.21) family. Expressed in brain, lung and kidney. In the kidney, strongly expressed in the cortex, at the luminal side of proximal convoluted tubules and in BBMVs. Weaker expression observed in the medulla (at protein level).

It is found in the membrane. The protein resides in the apical cell membrane. It carries out the reaction myo-inositol(out) + 2 Na(+)(out) = myo-inositol(in) + 2 Na(+)(in). It catalyses the reaction 1D-chiro-inositol(out) + 2 Na(+)(out) = 1D-chiro-inositol(in) + 2 Na(+)(in). The catalysed reaction is D-glucose(out) + 2 Na(+)(out) = D-glucose(in) + 2 Na(+)(in). The enzyme catalyses D-xylose(out) + 2 Na(+)(out) = D-xylose(in) + 2 Na(+)(in). With respect to regulation, MI transport activity stimulated five-fold under 24 hour hypertonic shock conditions. MI inward currents were gradually inhibited as increasing amounts of phlorizin were added to the superfusion medium. When sodium is replaced by potassium, MI uptake is dramatically reduced and in the presence of L-fucose or D-chiro-inositol (DCI), the specific accumulation of tracer amounts of MI is also reduced. Its function is as follows. Involved in the sodium-dependent cotransport of myo-inositol (MI) with a Na(+):MI stoichiometry of 2:1. Exclusively responsible for apical MI transport and absorption in intestine. Can also transport D-chiro-inositol (DCI) but not L-fucose. Exhibits stereospecific cotransport of both D-glucose and D-xylose. May induce apoptosis through the TNF-alpha, PDCD1 pathway. May play a role in the regulation of MI concentration in serum, involving reabsorption in at least the proximal tubule of the kidney. The sequence is that of Sodium/myo-inositol cotransporter 2 from Oryctolagus cuniculus (Rabbit).